Reading from the N-terminus, the 125-residue chain is SOSS complex subunit C homolog B (125 aa).

2 disordered regions span residues 44–73 and 105–125; these read PAPQ…RAAF and PATP…NNPK.

This sequence belongs to the SOSS-C family.

In Drosophila willistoni (Fruit fly), this protein is SOSS complex subunit C homolog B.